A 210-amino-acid polypeptide reads, in one-letter code: HTH-type transcriptional regulator TtgR (210 aa).

One can recognise an HTH tetR-type domain in the interval 10–70; it reads QETRAQIIEA…ALLDSLHETH (61 aa). The segment at residues 33–52 is a DNA-binding region (H-T-H motif); sequence TLADIAELAGVTRGAIYWHF.

As to quaternary structure, homodimer.

In terms of biological role, represses expression from the ttgABC operon promoter and its own expression. Binds to a promoter region between the divergently transcribed ttgR and ttgABC genes/operons; in the presence of chloramphenicol or tetracycline this binding no longer occurs and ttgR and ttgABC are derepressed. This suggests that TtgR binds these antibiotics. The polypeptide is HTH-type transcriptional regulator TtgR (ttgR) (Pseudomonas putida (strain DOT-T1E)).